We begin with the raw amino-acid sequence, 428 residues long: Glutamate-1-semialdehyde 2,1-aminomutase (428 aa).

Residue Lys-267 is modified to N6-(pyridoxal phosphate)lysine.

It belongs to the class-III pyridoxal-phosphate-dependent aminotransferase family. HemL subfamily. Homodimer. The cofactor is pyridoxal 5'-phosphate.

It is found in the cytoplasm. It carries out the reaction (S)-4-amino-5-oxopentanoate = 5-aminolevulinate. Its pathway is porphyrin-containing compound metabolism; protoporphyrin-IX biosynthesis; 5-aminolevulinate from L-glutamyl-tRNA(Glu): step 2/2. The protein operates within porphyrin-containing compound metabolism; chlorophyll biosynthesis. This chain is Glutamate-1-semialdehyde 2,1-aminomutase, found in Prochlorococcus marinus (strain MIT 9303).